Reading from the N-terminus, the 288-residue chain is Thymidylate synthase (288 aa).

Position 21 (arginine 21) interacts with dUMP. Residue asparagine 51 participates in (6R)-5,10-methylene-5,6,7,8-tetrahydrofolate binding. Residue 150 to 151 participates in dUMP binding; the sequence is RR. Cysteine 170 (nucleophile) is an active-site residue. DUMP-binding positions include 190-193, asparagine 201, and 231-233; these read RSGD and HIY. Aspartate 193 is a binding site for (6R)-5,10-methylene-5,6,7,8-tetrahydrofolate. Alanine 287 is a binding site for (6R)-5,10-methylene-5,6,7,8-tetrahydrofolate.

The protein belongs to the thymidylate synthase family. Bacterial-type ThyA subfamily. In terms of assembly, homodimer.

It localises to the cytoplasm. The enzyme catalyses dUMP + (6R)-5,10-methylene-5,6,7,8-tetrahydrofolate = 7,8-dihydrofolate + dTMP. It functions in the pathway pyrimidine metabolism; dTTP biosynthesis. Catalyzes the reductive methylation of 2'-deoxyuridine-5'-monophosphate (dUMP) to 2'-deoxythymidine-5'-monophosphate (dTMP) while utilizing 5,10-methylenetetrahydrofolate (mTHF) as the methyl donor and reductant in the reaction, yielding dihydrofolate (DHF) as a by-product. This enzymatic reaction provides an intracellular de novo source of dTMP, an essential precursor for DNA biosynthesis. The chain is Thymidylate synthase from Phytoplasma mali (strain AT).